The following is a 97-amino-acid chain: uncharacterized protein (97 aa).

Functionally, may have a regulatory function. This is an uncharacterized protein from Synechocystis sp. (strain ATCC 27184 / PCC 6803 / Kazusa).